The chain runs to 214 residues: Small ribosomal subunit protein uS4c (214 aa).

2 stretches are compositionally biased toward basic residues: residues 1–14 (MSRY…KIKR) and 36–46 (LSRPKPKKKSQ). A disordered region spans residues 1–46 (MSRYRGPRVKKIKRLGSLPGLTTKKPPIVVRDPRKLSRPKPKKKSQ). The 62-residue stretch at 92–153 (MRLDNTLFRL…KEKSKALIQN (62 aa)) folds into the S4 RNA-binding domain.

Belongs to the universal ribosomal protein uS4 family. Part of the 30S ribosomal subunit. Contacts protein S5. The interaction surface between S4 and S5 is involved in control of translational fidelity.

Its subcellular location is the plastid. It localises to the chloroplast. Functionally, one of the primary rRNA binding proteins, it binds directly to 16S rRNA where it nucleates assembly of the body of the 30S subunit. With S5 and S12 plays an important role in translational accuracy. The protein is Small ribosomal subunit protein uS4c (rps4) of Pelargonium hortorum (Common geranium).